Reading from the N-terminus, the 54-residue chain is Large ribosomal subunit protein bL32 (54 aa).

The tract at residues 1 to 24 is disordered; the sequence is MAVQKSKPTRSKRGMRRSHDSLKE. Basic residues predominate over residues 7–16; it reads KPTRSKRGMR.

The protein belongs to the bacterial ribosomal protein bL32 family.

In Buchnera aphidicola subsp. Schizaphis graminum (strain Sg), this protein is Large ribosomal subunit protein bL32.